The following is a 304-amino-acid chain: Acetyl-coenzyme A carboxylase carboxyl transferase subunit beta (304 aa).

Residues 52-304 (EVTKCPSCGV…TIFKVLNDII (253 aa)) enclose the CoA carboxyltransferase N-terminal domain. Cysteine 56, cysteine 59, cysteine 75, and cysteine 78 together coordinate Zn(2+). A C4-type zinc finger spans residues 56–78 (CPSCGVLSHKSEIRANMKMCSNC).

Belongs to the AccD/PCCB family. In terms of assembly, acetyl-CoA carboxylase is a heterohexamer composed of biotin carboxyl carrier protein (AccB), biotin carboxylase (AccC) and two subunits each of ACCase subunit alpha (AccA) and ACCase subunit beta (AccD). It depends on Zn(2+) as a cofactor.

It is found in the cytoplasm. It carries out the reaction N(6)-carboxybiotinyl-L-lysyl-[protein] + acetyl-CoA = N(6)-biotinyl-L-lysyl-[protein] + malonyl-CoA. Its pathway is lipid metabolism; malonyl-CoA biosynthesis; malonyl-CoA from acetyl-CoA: step 1/1. Component of the acetyl coenzyme A carboxylase (ACC) complex. Biotin carboxylase (BC) catalyzes the carboxylation of biotin on its carrier protein (BCCP) and then the CO(2) group is transferred by the transcarboxylase to acetyl-CoA to form malonyl-CoA. The protein is Acetyl-coenzyme A carboxylase carboxyl transferase subunit beta of Fusobacterium nucleatum subsp. nucleatum (strain ATCC 25586 / DSM 15643 / BCRC 10681 / CIP 101130 / JCM 8532 / KCTC 2640 / LMG 13131 / VPI 4355).